Consider the following 324-residue polypeptide: Cathepsin L-like proteinase (324 aa).

The signal sequence occupies residues 1–16 (MKLIIALAALIVVINA). Disulfide bonds link Cys-131–Cys-174, Cys-165–Cys-206, and Cys-263–Cys-312. Residue Cys-134 is part of the active site. Catalysis depends on residues His-270 and Asn-290.

This sequence belongs to the peptidase C1 family. Expressed in larval carcasses and gut, and adult gut.

In Phaedon cochleariae (Mustard beetle), this protein is Cathepsin L-like proteinase.